Consider the following 230-residue polypeptide: Orotidine 5'-phosphate decarboxylase (230 aa).

Substrate is bound by residues Asp-11, Lys-34, 61 to 70 (DLKLHDIPNT), Thr-117, Arg-179, Gln-188, Gly-208, and Arg-209. Lys-63 functions as the Proton donor in the catalytic mechanism.

Belongs to the OMP decarboxylase family. Type 1 subfamily. In terms of assembly, homodimer.

It catalyses the reaction orotidine 5'-phosphate + H(+) = UMP + CO2. It participates in pyrimidine metabolism; UMP biosynthesis via de novo pathway; UMP from orotate: step 2/2. Its function is as follows. Catalyzes the decarboxylation of orotidine 5'-monophosphate (OMP) to uridine 5'-monophosphate (UMP). This Streptococcus uberis (strain ATCC BAA-854 / 0140J) protein is Orotidine 5'-phosphate decarboxylase.